The primary structure comprises 801 residues: Protocadherin beta-8 (801 aa).

The signal sequence occupies residues methionine 1 to alanine 29. Over glutamate 30–leucine 691 the chain is Extracellular. 5 consecutive Cadherin domains span residues valine 36 to phenylalanine 134, methionine 139 to phenylalanine 243, tyrosine 248 to valine 348, phenylalanine 353 to phenylalanine 452, and tyrosine 457 to valine 562. A disulfide bridge connects residues cysteine 97 and cysteine 103. Asparagine 419 and asparagine 437 each carry an N-linked (GlcNAc...) asparagine glycan. An N-linked (GlcNAc...) asparagine glycan is attached at asparagine 568. The Cadherin 6 domain maps to serine 569–leucine 672. The chain crosses the membrane as a helical span at residues valine 692–valine 710. The Cytoplasmic portion of the chain corresponds to alanine 711–lysine 801.

Forms homodimers in trans (molecules expressed by two different cells). Forms promiscuous heterodimers in cis (at the plasma membrane of the same cell) with other protocadherins.

The protein localises to the cell membrane. Functionally, calcium-dependent cell-adhesion protein involved in cells self-recognition and non-self discrimination. Thereby, it is involved in the establishment and maintenance of specific neuronal connections in the brain. The chain is Protocadherin beta-8 from Pan troglodytes (Chimpanzee).